The chain runs to 63 residues: Large ribosomal subunit protein uL30 (63 aa).

This sequence belongs to the universal ribosomal protein uL30 family. Part of the 50S ribosomal subunit.

The chain is Large ribosomal subunit protein uL30 from Granulibacter bethesdensis (strain ATCC BAA-1260 / CGDNIH1).